Here is a 154-residue protein sequence, read N- to C-terminus: Deoxyuridine 5'-triphosphate nucleotidohydrolase (154 aa).

Substrate-binding positions include Arg64 to Gly66, Asn77, Thr81 to Asp83, and Lys91. Residues Leu135 to Leu154 form a disordered region. Residues Gly144–Leu154 are compositionally biased toward gly residues.

The protein belongs to the dUTPase family. Homotrimer. The cofactor is Mg(2+).

It catalyses the reaction dUTP + H2O = dUMP + diphosphate + H(+). It participates in pyrimidine metabolism; dUMP biosynthesis; dUMP from dCTP (dUTP route): step 2/2. Functionally, this enzyme is involved in nucleotide metabolism: it produces dUMP, the immediate precursor of thymidine nucleotides and it decreases the intracellular concentration of dUTP so that uracil cannot be incorporated into DNA. The sequence is that of Deoxyuridine 5'-triphosphate nucleotidohydrolase from Mycolicibacterium vanbaalenii (strain DSM 7251 / JCM 13017 / BCRC 16820 / KCTC 9966 / NRRL B-24157 / PYR-1) (Mycobacterium vanbaalenii).